Consider the following 428-residue polypeptide: Divergent protein kinase domain 1A (428 aa).

The Cytoplasmic portion of the chain corresponds to 1–27 (MARGLFSRAWLSKTHHFQARLSYIRVK). A helical transmembrane segment spans residues 28 to 48 (YLFLTWLAVFVSSWVVYVQYS). Topologically, residues 49–428 (TYTELCRGRE…WKQISHTTDS (380 aa)) are lumenal.

This sequence belongs to the DIPK family. Among the many cysteines in the lumenal domain, most are probably involved in disulfide bonds.

The protein resides in the endoplasmic reticulum membrane. The sequence is that of Divergent protein kinase domain 1A (dipk1a) from Danio rerio (Zebrafish).